The chain runs to 141 residues: Hemoglobin subunit alpha-1/2 (141 aa).

One can recognise a Globin domain in the interval 1–141 (VLSPTDKTNV…VSTVLTSKYR (141 aa)). Ser3 is modified (phosphoserine). At Lys7 the chain carries N6-succinyllysine. Thr8 carries the phosphothreonine modification. Lys11 carries the post-translational modification N6-succinyllysine. Lys16 is subject to N6-acetyllysine; alternate. Residue Lys16 is modified to N6-succinyllysine; alternate. Tyr24 is subject to Phosphotyrosine. Lys40 carries the post-translational modification N6-succinyllysine. Ser49 bears the Phosphoserine mark. His58 contributes to the O2 binding site. His87 is a binding site for heme b. Position 102 is a phosphoserine (Ser102). Thr108 carries the post-translational modification Phosphothreonine. A Phosphoserine modification is found at Ser124. Thr134 and Thr137 each carry phosphothreonine. Position 138 is a phosphoserine (Ser138).

This sequence belongs to the globin family. As to quaternary structure, heterotetramer of two alpha chains and two beta chains. Red blood cells.

Its function is as follows. Involved in oxygen transport from the lung to the various peripheral tissues. This Tapirus terrestris (Lowland tapir) protein is Hemoglobin subunit alpha-1/2.